A 119-amino-acid polypeptide reads, in one-letter code: Large ribosomal subunit protein uL18 (119 aa).

Residues 1 to 23 (MISKPDKNKTRQRRHARVRGKIS) are disordered. The segment covering 10–20 (TRQRRHARVRG) has biased composition (basic residues).

This sequence belongs to the universal ribosomal protein uL18 family. In terms of assembly, part of the 50S ribosomal subunit; part of the 5S rRNA/L5/L18/L25 subcomplex. Contacts the 5S and 23S rRNAs.

In terms of biological role, this is one of the proteins that bind and probably mediate the attachment of the 5S RNA into the large ribosomal subunit, where it forms part of the central protuberance. This Lacticaseibacillus casei (strain BL23) (Lactobacillus casei) protein is Large ribosomal subunit protein uL18.